The chain runs to 319 residues: FAD-dependent oxidoreductase FVFD30 (319 aa).

Arg-6, Asp-18, and Lys-25 together coordinate FAD. Residues Lys-129 and Gly-188 each contribute to the NAD(+) site. NADP(+) is bound by residues Lys-129 and Gly-188. Residues Asp-228 and Tyr-265 each contribute to the FAD site. Position 228 (Asp-228) interacts with 6-hydroxy-FAD. An NAD(+)-binding site is contributed by Tyr-265. Tyr-265 serves as a coordination point for NADP(+). The chain crosses the membrane as a helical span at residues 281-301 (GVGYFGVWWGIVIGGWLASLL).

This sequence belongs to the FAD-dependent oxidoreductase family.

Its subcellular location is the membrane. Functionally, probable FAD-dependent oxidoreductase that plays a role in the regulation of fruiting body development. In Flammulina velutipes (Agaricus velutipes), this protein is FAD-dependent oxidoreductase FVFD30.